The sequence spans 287 residues: Shikimate dehydrogenase (NADP(+)) (287 aa).

Residues 20–22 (SRS) and threonine 67 contribute to the shikimate site. The active-site Proton acceptor is the lysine 71. Glutamate 84 is an NADP(+) binding site. 2 residues coordinate shikimate: asparagine 93 and aspartate 108. NADP(+)-binding positions include 132–136 (GAGGA), 156–161 (NRTAAR), and methionine 226. Residue tyrosine 228 coordinates shikimate. Position 250 (glycine 250) interacts with NADP(+).

Belongs to the shikimate dehydrogenase family. In terms of assembly, homodimer.

It catalyses the reaction shikimate + NADP(+) = 3-dehydroshikimate + NADPH + H(+). Its pathway is metabolic intermediate biosynthesis; chorismate biosynthesis; chorismate from D-erythrose 4-phosphate and phosphoenolpyruvate: step 4/7. Functionally, involved in the biosynthesis of the chorismate, which leads to the biosynthesis of aromatic amino acids. Catalyzes the reversible NADPH linked reduction of 3-dehydroshikimate (DHSA) to yield shikimate (SA). The chain is Shikimate dehydrogenase (NADP(+)) from Bordetella pertussis (strain Tohama I / ATCC BAA-589 / NCTC 13251).